The primary structure comprises 266 residues: MKEMKVIIAGPRGRMGHEAVLLMERTEHFNLVAAVDYKHGGEKISDLPGMPALDATIYADLHTCLEEVEADVLLDLTTPEVGKQHVTLAVERGLRSVIGTTGFTEEELKQLTETAKEKAVGTIIAPNFAIGAVLMMKFSQMAAKYFQDVEVIELHHDQKLDAPSGTAVKTVELIRQNRESKQQGHPNEVEQLEGARGANVDGIHIHSVRLPGLIAHQEVMFGGDGQMLTVRHDSFNRASFMSGVKLSIETVMNLDHLVYGLENIID.

10-15 is an NAD(+) binding site; the sequence is GPRGRM. Residue Lys-38 participates in NADP(+) binding. Residues 99–101 and 125–128 contribute to the NAD(+) site; these read GTT and APNF. Residue His-155 is the Proton donor/acceptor of the active site. Residue His-156 coordinates (S)-2,3,4,5-tetrahydrodipicolinate. Lys-159 (proton donor) is an active-site residue. 165–166 lines the (S)-2,3,4,5-tetrahydrodipicolinate pocket; that stretch reads GT.

Belongs to the DapB family.

It is found in the cytoplasm. It carries out the reaction (S)-2,3,4,5-tetrahydrodipicolinate + NAD(+) + H2O = (2S,4S)-4-hydroxy-2,3,4,5-tetrahydrodipicolinate + NADH + H(+). The catalysed reaction is (S)-2,3,4,5-tetrahydrodipicolinate + NADP(+) + H2O = (2S,4S)-4-hydroxy-2,3,4,5-tetrahydrodipicolinate + NADPH + H(+). The protein operates within amino-acid biosynthesis; L-lysine biosynthesis via DAP pathway; (S)-tetrahydrodipicolinate from L-aspartate: step 4/4. In terms of biological role, catalyzes the conversion of 4-hydroxy-tetrahydrodipicolinate (HTPA) to tetrahydrodipicolinate. The chain is 4-hydroxy-tetrahydrodipicolinate reductase from Bacillus anthracis (strain A0248).